A 215-amino-acid chain; its full sequence is Large ribosomal subunit protein uL4 (215 aa).

The tract at residues 46–72 (TAKSKNRAEVSGGGRKPWAQKGGGRAR) is disordered. The segment covering 56-71 (SGGGRKPWAQKGGGRA) has biased composition (gly residues).

This sequence belongs to the universal ribosomal protein uL4 family. Part of the 50S ribosomal subunit.

Functionally, one of the primary rRNA binding proteins, this protein initially binds near the 5'-end of the 23S rRNA. It is important during the early stages of 50S assembly. It makes multiple contacts with different domains of the 23S rRNA in the assembled 50S subunit and ribosome. Its function is as follows. Forms part of the polypeptide exit tunnel. This Helicobacter pylori (strain Shi470) protein is Large ribosomal subunit protein uL4.